Consider the following 430-residue polypeptide: Enolase (430 aa).

Gln-167 serves as a coordination point for (2R)-2-phosphoglycerate. Glu-209 acts as the Proton donor in catalysis. Residues Asp-246, Glu-289, and Asp-316 each coordinate Mg(2+). Positions 341, 370, 371, and 392 each coordinate (2R)-2-phosphoglycerate. Lys-341 acts as the Proton acceptor in catalysis.

Belongs to the enolase family. In terms of assembly, component of the RNA degradosome, a multiprotein complex involved in RNA processing and mRNA degradation. Requires Mg(2+) as cofactor.

It localises to the cytoplasm. The protein resides in the secreted. Its subcellular location is the cell surface. It carries out the reaction (2R)-2-phosphoglycerate = phosphoenolpyruvate + H2O. It participates in carbohydrate degradation; glycolysis; pyruvate from D-glyceraldehyde 3-phosphate: step 4/5. Catalyzes the reversible conversion of 2-phosphoglycerate (2-PG) into phosphoenolpyruvate (PEP). It is essential for the degradation of carbohydrates via glycolysis. In Idiomarina loihiensis (strain ATCC BAA-735 / DSM 15497 / L2-TR), this protein is Enolase.